A 287-amino-acid chain; its full sequence is MELYETSPYFYQEPHFYDGENYLPVHLQGFEPPGYERTELSLSPEARGPLEEKGLGTPEHCPGQCLPWACKVCKRKSVSVDRRRAATLREKRRLKKVNEAFEALKRSTLLNPNQRLPKVEILRSAIQYIERLQALLSSLNQEERDLRYRGGGGPSRWYPVNATPTAPPAVRSGAMHWSLVPTQEIICSQLTLQVPTTCTPLRPSWTASRWRICLSPSQMKPCPTEIVCQAGCAWEPLSWCQTPPLLQQGPFKWGCPGAQKTALGCHKPDYPPSIHIRLTPSPAREFN.

Phosphoserine; by CaMK2G occurs at positions 77 and 79. A bHLH domain is found at 81 to 132; the sequence is DRRRAATLREKRRLKKVNEAFEALKRSTLLNPNQRLPKVEILRSAIQYIERL. Phosphothreonine; by CaMK2G is present on Thr87.

Homodimer and heterodimer with E12; heterodimerization enhances MYOG DNA-binding and transcriptional activities. Interacts with SMARCA4/BRG1/BAF190A. Interacts (via C-terminal region) with SSRP1 and SUPT16H; the interaction is indicative of an interaction with the FACT complex. Interacts with CSRP3. In terms of processing, phosphorylated by CAMK2G on threonine and serine amino acids in a muscle activity-dependent manner. Phosphorylation of Thr-87 impairs both DNA-binding and trans-activation functions in contracting muscles. In terms of tissue distribution, expressed in muscle (at protein level).

Its subcellular location is the nucleus. Its function is as follows. Acts as a transcriptional activator that promotes transcription of muscle-specific target genes and plays a role in muscle differentiation, cell cycle exit and muscle atrophy. Essential for the development of functional embryonic skeletal fiber muscle differentiation. However is dispensable for postnatal skeletal muscle growth; phosphorylation by CAMK2G inhibits its transcriptional activity in respons to muscle activity. Required for the recruitment of the FACT complex to muscle-specific promoter regions, thus promoting gene expression initiation. During terminal myoblast differentiation, plays a role as a strong activator of transcription at loci with an open chromatin structure previously initiated by MYOD1. Together with MYF5 and MYOD1, co-occupies muscle-specific gene promoter core regions during myogenesis. Also cooperates with myocyte-specific enhancer factor MEF2D and BRG1-dependent recruitment of SWI/SNF chromatin-remodeling enzymes to alter chromatin structure at myogenic late gene promoters. Facilitates cell cycle exit during terminal muscle differentiation through the up-regulation of miR-20a expression, which in turn represses genes involved in cell cycle progression. Binds to the E-box containing (E1) promoter region of the miR-20a gene. Also plays a role in preventing reversal of muscle cell differentiation. Contributes to the atrophy-related gene expression in adult denervated muscles. Induces fibroblasts to differentiate into myoblasts. In Rattus norvegicus (Rat), this protein is Myogenin (Myog).